The primary structure comprises 326 residues: Putative F-box protein At3g22710 (326 aa).

Residues 1–50 form the F-box domain; the sequence is MTMPDLPPDLVEEILSRVPATSVKKLRSTCTQWNAIFKDERFTEKHFSKA.

The polypeptide is Putative F-box protein At3g22710 (Arabidopsis thaliana (Mouse-ear cress)).